The following is a 233-amino-acid chain: MAIVTLDEMLEAGVHFGHQSRRWNPKMSQYIFTERNGIHIIDLVQTAQLLAEAYDFLRISAEEGKKVLFIGTKRQAANIIAQEATRCGAFYINQRWLGGTLTNWTTIQSRVEYLKELEMREESGALDLLPKKEAAILRRQLEKLRKSLGGIQTMRHIPDIVVIVDQKRENNAVQECKKLNIPIIALLDTNSDPDVVDIPIPGNDDAIRSIKLIIGKLADAILEGSHTKTSSAE.

Belongs to the universal ribosomal protein uS2 family.

Its subcellular location is the plastid. The protein localises to the cyanelle. The sequence is that of Small ribosomal subunit protein uS2c (rps2) from Cyanophora paradoxa.